The following is a 167-amino-acid chain: Ubiquitin-fold modifier-conjugating enzyme 1 (167 aa).

The Glycyl thioester intermediate role is filled by C116. A Glycyl lysine isopeptide (Lys-Gly) (interchain with G-Cter in UFM1) cross-link involves residue K122.

It belongs to the ubiquitin-conjugating enzyme family. UFC1 subfamily. Interacts with UBA5 (via C-terminus). Interacts with UFL1. Interacts with UFM1. Interacts with KIRREL3. Post-translationally, ufmylated at Lys-122. Deufmylated by UFSP1.

In terms of biological role, E2-like enzyme which specifically catalyzes the second step in ufmylation. Accepts the ubiquitin-like modifier UFM1 from the E1 enzyme UBA5 and forms an intermediate with UFM1 via a thioester linkage. Ufmylation is involved in various processes, such as ribosome recycling, response to DNA damage, interferon response or reticulophagy (also called ER-phagy). In Mus musculus (Mouse), this protein is Ubiquitin-fold modifier-conjugating enzyme 1.